The following is a 235-amino-acid chain: Rab-like protein 3 (235 aa).

The segment at 1-235 is small GTPase-like; the sequence is MASLDRVKVL…GGNFKSLHYD (235 aa). GTP contacts are provided by residues 16–21, 148–150, and 179–180; these read GVGKSS, KLD, and DC.

The protein belongs to the small GTPase superfamily. Rab family. Homodimer.

Functionally, required for KRAS signaling regulation and modulation of cell proliferation. Regulator of KRAS prenylation, and probably prenylation of other small GTPases. Required for lymphocyte development and function. Not required for myeloid cell development. This chain is Rab-like protein 3 (rabl3), found in Xenopus laevis (African clawed frog).